Here is a 734-residue protein sequence, read N- to C-terminus: Phosphoribosylformylglycinamidine synthase subunit PurL (734 aa).

H46 is an active-site residue. ATP-binding residues include Y49 and K88. Mg(2+) is bound at residue E90. Residues 91 to 94 (SHNH) and R113 contribute to the substrate site. H92 serves as the catalytic Proton acceptor. D114 is a binding site for Mg(2+). Q237 contacts substrate. Mg(2+) is bound at residue D265. 309–311 (ESQ) lines the substrate pocket. Residues D489 and G526 each coordinate ATP. Mg(2+) is bound at residue N527. S529 serves as a coordination point for substrate.

Belongs to the FGAMS family. In terms of assembly, monomer. Part of the FGAM synthase complex composed of 1 PurL, 1 PurQ and 2 PurS subunits.

It localises to the cytoplasm. It carries out the reaction N(2)-formyl-N(1)-(5-phospho-beta-D-ribosyl)glycinamide + L-glutamine + ATP + H2O = 2-formamido-N(1)-(5-O-phospho-beta-D-ribosyl)acetamidine + L-glutamate + ADP + phosphate + H(+). It participates in purine metabolism; IMP biosynthesis via de novo pathway; 5-amino-1-(5-phospho-D-ribosyl)imidazole from N(2)-formyl-N(1)-(5-phospho-D-ribosyl)glycinamide: step 1/2. In terms of biological role, part of the phosphoribosylformylglycinamidine synthase complex involved in the purines biosynthetic pathway. Catalyzes the ATP-dependent conversion of formylglycinamide ribonucleotide (FGAR) and glutamine to yield formylglycinamidine ribonucleotide (FGAM) and glutamate. The FGAM synthase complex is composed of three subunits. PurQ produces an ammonia molecule by converting glutamine to glutamate. PurL transfers the ammonia molecule to FGAR to form FGAM in an ATP-dependent manner. PurS interacts with PurQ and PurL and is thought to assist in the transfer of the ammonia molecule from PurQ to PurL. This Gluconobacter oxydans (strain 621H) (Gluconobacter suboxydans) protein is Phosphoribosylformylglycinamidine synthase subunit PurL.